Consider the following 556-residue polypeptide: Formate--tetrahydrofolate ligase (556 aa).

65–72 is an ATP binding site; sequence TPAGEGKT.

This sequence belongs to the formate--tetrahydrofolate ligase family.

The catalysed reaction is (6S)-5,6,7,8-tetrahydrofolate + formate + ATP = (6R)-10-formyltetrahydrofolate + ADP + phosphate. The protein operates within one-carbon metabolism; tetrahydrofolate interconversion. This Carboxydothermus hydrogenoformans (strain ATCC BAA-161 / DSM 6008 / Z-2901) protein is Formate--tetrahydrofolate ligase.